The following is a 377-amino-acid chain: UPF0754 membrane protein GTNG_0550 (377 aa).

2 consecutive transmembrane segments (helical) span residues Leu-7–Val-27 and Tyr-357–Leu-377.

The protein belongs to the UPF0754 family.

The protein resides in the cell membrane. This is UPF0754 membrane protein GTNG_0550 from Geobacillus thermodenitrificans (strain NG80-2).